The chain runs to 91 residues: UPF0223 protein SAB0963 (91 aa).

It belongs to the UPF0223 family.

This Staphylococcus aureus (strain bovine RF122 / ET3-1) protein is UPF0223 protein SAB0963.